The following is a 292-amino-acid chain: uncharacterized protein (292 aa).

A run of 10 helical transmembrane segments spans residues 6 to 26 (LGII…KVGI), 32 to 52 (LLFS…ILFI), 68 to 88 (IIMS…GMQF), 94 to 114 (TSVL…FSLN), 123 to 143 (MGLV…MLNI), 147 to 167 (ALFG…ANVF), 182 to 202 (AWHL…FEAV), 214 to 234 (SLLF…FWVL), 242 to 262 (ASMA…LQLH), and 265 to 285 (ITIN…MNTF). EamA domains lie at 13 to 137 (LIWG…FIFG) and 159 to 285 (LSWG…MNTF).

This sequence belongs to the EamA transporter family.

It is found in the cell membrane. This is an uncharacterized protein from Bacillus subtilis (strain 168).